The sequence spans 154 residues: Oleosin 16.4 kDa (154 aa).

Alanine 2 carries the N-acetylalanine modification. Residues 2 to 33 are polar; that stretch reads ADRDRSYRTFDQVVRGDRTNYQSGPSTTQVLT. 3 consecutive transmembrane segments (helical) span residues 31-51, 65-85, and 86-106; these read VLTV…AGLT, LFVI…MAVA, and GFLS…YVFN. The tract at residues 34–105 is hydrophobic; that stretch reads VLTLLPIGGT…TGLSSLSYVF (72 aa).

The protein belongs to the oleosin family.

Its subcellular location is the lipid droplet. It localises to the membrane. May have a structural role to stabilize the lipid body during desiccation of the seed by preventing coalescence of the oil. Probably interacts with both lipid and phospholipid moieties of lipid bodies. May also provide recognition signals for specific lipase anchorage in lipolysis during seedling growth. The sequence is that of Oleosin 16.4 kDa (MATP7) from Gossypium hirsutum (Upland cotton).